The following is a 325-amino-acid chain: D site-binding protein (325 aa).

3 disordered regions span residues 1–100 (MARP…PGLL), 124–198 (LEHG…DPDT), and 212–255 (LALS…EQKD). Over residues 17–28 (GPTGAPPGGGAL) the composition is skewed to gly residues. 2 stretches are compositionally biased toward low complexity: residues 29-38 (LGLRSLLQGT) and 71-80 (AGPADASAGA). Residue serine 86 is modified to Phosphoserine. The segment covering 88–100 (RGRPGAAPGPGLL) has biased composition (low complexity). Pro residues predominate over residues 129 to 153 (PPSPPPPGGPSPAPSPVRTPAPSPR). A compositionally biased stretch (low complexity) spans 166 to 176 (PGHAPARAALG). The span at 221-236 (ETFDPRRHRFSEEELK) shows a compositional bias: basic and acidic residues. Residues 255–318 (DEKYWSRRYK…SHYRAVLSRY (64 aa)) form the bZIP domain. The segment at 257 to 279 (KYWSRRYKNNEAAKRSRDARRLK) is basic motif. The tract at residues 283-297 (ISVRAAFLEKENALL) is leucine-zipper.

It belongs to the bZIP family. PAR subfamily. In terms of assembly, binds DNA as a homodimer or a heterodimer. Can form a heterodimer with TEF.

The protein localises to the nucleus. In terms of biological role, this transcriptional activator recognizes and binds to the sequence 5'-RTTAYGTAAY-3' found in the promoter of genes such as albumin, CYP2A4 and CYP2A5. It is not essential for circadian rhythm generation, but modulates important clock output genes. May be a direct target for regulation by the circadian pacemaker component clock. May affect circadian period and sleep regulation. This chain is D site-binding protein (DBP), found in Bos taurus (Bovine).